The chain runs to 113 residues: Prefoldin subunit beta (113 aa).

Belongs to the prefoldin subunit beta family. As to quaternary structure, heterohexamer of two alpha and four beta subunits.

It is found in the cytoplasm. Molecular chaperone capable of stabilizing a range of proteins. Seems to fulfill an ATP-independent, HSP70-like function in archaeal de novo protein folding. This chain is Prefoldin subunit beta, found in Methanococcus vannielii (strain ATCC 35089 / DSM 1224 / JCM 13029 / OCM 148 / SB).